The chain runs to 149 residues: Large ribosomal subunit protein eL19 (149 aa).

A disordered region spans residues 46–99; it reads EDGTIEAKTAKGNSRGRARKRQQKRAYGHKKGHGSRKGRSGGRQNEKEDWQSRI. Positions 59–85 are enriched in basic residues; the sequence is SRGRARKRQQKRAYGHKKGHGSRKGRS. Over residues 89 to 99 the composition is skewed to basic and acidic residues; that stretch reads QNEKEDWQSRI.

The protein belongs to the eukaryotic ribosomal protein eL19 family. Part of the 50S ribosomal subunit.

Functionally, binds to the 23S rRNA. In Natronomonas pharaonis (strain ATCC 35678 / DSM 2160 / CIP 103997 / JCM 8858 / NBRC 14720 / NCIMB 2260 / Gabara) (Halobacterium pharaonis), this protein is Large ribosomal subunit protein eL19.